The sequence spans 61 residues: Progonadoliberin-1 (61 aa).

Pyrrolidone carboxylic acid is present on Q1. G10 carries the glycine amide modification.

The protein belongs to the GnRH family.

It localises to the secreted. Stimulates the secretion of gonadotropins; it stimulates the secretion of both luteinizing and follicle-stimulating hormones. The protein is Progonadoliberin-1 (GNRH1) of Ovis aries (Sheep).